The following is a 1012-amino-acid chain: DNA polymerase catalytic subunit (1012 aa).

It belongs to the DNA polymerase type-B family.

It is found in the host nucleus. The catalysed reaction is DNA(n) + a 2'-deoxyribonucleoside 5'-triphosphate = DNA(n+1) + diphosphate. The sequence is that of DNA polymerase catalytic subunit (U38) from Human herpesvirus 6A (strain Uganda-1102) (HHV-6 variant A).